The primary structure comprises 167 residues: Transcription factor E (167 aa).

The HTH TFE/IIEalpha-type domain maps to 5 to 87 (ENPIHRAYLL…LWKICPESLD (83 aa)).

The protein belongs to the TFE family. In terms of assembly, monomer. Interaction with RNA polymerase subunits RpoF and RpoE is necessary for Tfe stimulatory transcription activity. Able to interact with Tbp and RNA polymerase in the absence of DNA promoter. Interacts both with the preinitiation and elongation complexes.

In terms of biological role, transcription factor that plays a role in the activation of archaeal genes transcribed by RNA polymerase. Facilitates transcription initiation by enhancing TATA-box recognition by TATA-box-binding protein (Tbp), and transcription factor B (Tfb) and RNA polymerase recruitment. Not absolutely required for transcription in vitro, but particularly important in cases where Tbp or Tfb function is not optimal. It dynamically alters the nucleic acid-binding properties of RNA polymerases by stabilizing the initiation complex and destabilizing elongation complexes. Seems to translocate with the RNA polymerase following initiation and acts by binding to the non template strand of the transcription bubble in elongation complexes. The sequence is that of Transcription factor E from Methanothrix thermoacetophila (strain DSM 6194 / JCM 14653 / NBRC 101360 / PT) (Methanosaeta thermophila).